The sequence spans 311 residues: MKGLVIKNTGSWYQLKTDRGELIKAKLKGNFRLKGIQSTNPISIGDYVLIEKDLYGTAFISTIEDRKNYIIRRASNLSKQSHIIATNLDQAFLIVTVNYPITTTIFIDRFLVTTEAYRIPTLLFFNKTDLYNNHDMNYADILIHLYKSIGYSCYKIAATKDEDLLFMEKLLRGKITLFYGHSGVGKSTIVNRLIPNAKQKVQSISKHHNKGMHTTTFSKMLELPSSSGYIIDTPGIKGFGIFDIEKEEISHYFPDIFRFSPYCKFYNCTHQKEPACAVREAIKNHYISKSRYISYINILEDVDMNKYREAF.

The 163-residue stretch at 77–239 folds into the CP-type G domain; the sequence is LSKQSHIIAT…IIDTPGIKGF (163 aa). Residues 126–129 and 180–188 each bind GTP; these read NKTD and GHSGVGKST. Residues Cys-263, Cys-268, His-270, and Cys-276 each contribute to the Zn(2+) site.

It belongs to the TRAFAC class YlqF/YawG GTPase family. RsgA subfamily. As to quaternary structure, monomer. Associates with 30S ribosomal subunit, binds 16S rRNA. Zn(2+) is required as a cofactor.

Its subcellular location is the cytoplasm. Functionally, one of several proteins that assist in the late maturation steps of the functional core of the 30S ribosomal subunit. Helps release RbfA from mature subunits. May play a role in the assembly of ribosomal proteins into the subunit. Circularly permuted GTPase that catalyzes slow GTP hydrolysis, GTPase activity is stimulated by the 30S ribosomal subunit. The polypeptide is Small ribosomal subunit biogenesis GTPase RsgA (Azobacteroides pseudotrichonymphae genomovar. CFP2).